The sequence spans 241 residues: Platelet-derived growth factor subunit B (241 aa).

Residues 1-20 (MNRCWALFLPLCCYLRLVSA) form the signal peptide. Residues 21 to 81 (EGDPIPEELY…ELESSSRGRR (61 aa)) constitute a propeptide, removed in mature form. Asn-63 is a glycosylation site (N-linked (GlcNAc...) asparagine). 3 disulfide bridges follow: Cys-97-Cys-141, Cys-130-Cys-178, and Cys-134-Cys-180. Positions 191–241 (RSPGTSREQRAKTPQARVTIRTVRIRRPPKGKHRKFKHTHDKAALKETLGA) are cleaved as a propeptide — removed in mature form. A compositionally biased stretch (basic residues) spans 217-230 (RPPKGKHRKFKHTH). Positions 217 to 241 (RPPKGKHRKFKHTHDKAALKETLGA) are disordered.

It belongs to the PDGF/VEGF growth factor family. Antiparallel homodimer; disulfide-linked. Antiparallel heterodimer with PDGFA; disulfide-linked. The PDGFB homodimer interacts with PDGFRA and PDGFRB homodimers, and with heterodimers formed by PDGFRA and PDGFRB. The heterodimer composed of PDGFA and PDGFB interacts with PDGFRB homodimers, and with heterodimers formed by PDGFRA and PDGFRB. Interacts with XLKD1. Interacts with LRP1. Interacts with SORL1 (via the N-terminal ectodomain). Interacts with CD82; this interaction inhibits PDGFB-mediated signaling pathway. Localized to vascular smooth muscle cells. Also weakly expressed by cortical interstitial cells but absent in tubules. Up-regulated in areas of renal fibrosis. In mice with unilateral ureteral obstruction, an increased expression in interstitial cells and in some tubules observed after day 4.

It localises to the secreted. Its function is as follows. Growth factor that plays an essential role in the regulation of embryonic development, cell proliferation, cell migration, survival and chemotaxis. Potent mitogen for cells of mesenchymal origin. Required for normal proliferation and recruitment of pericytes and vascular smooth muscle cells in the central nervous system, skin, lung, heart and placenta. Required for normal blood vessel development, and for normal development of kidney glomeruli. Plays an important role in wound healing. Signaling is modulated by the formation of heterodimers with PDGFA. The chain is Platelet-derived growth factor subunit B (Pdgfb) from Mus musculus (Mouse).